The sequence spans 760 residues: DEAD-box ATP-dependent RNA helicase 24 (760 aa).

Disordered stretches follow at residues 1–76 (MSNR…GEVD) and 90–113 (QEMK…DDDD). The span at 14–27 (NRQTSYSFERSQAP) shows a compositional bias: polar residues. A compositionally biased stretch (acidic residues) spans 41-64 (NSEDADLDNIDYMENEEAEEDIEE). The segment covering 99-109 (KPKEKLERYKD) has biased composition (basic and acidic residues). A Phosphoserine modification is found at Ser160. The short motif at 228–256 (KTFEDCGFSSQIMSAIKKQAYEKPTAIQC) is the Q motif element. Positions 259–434 (LPIVLSGRDV…REILSDPIRV (176 aa)) constitute a Helicase ATP-binding domain. 272–279 (AKTGSGKT) lines the ATP pocket. The DEAD box signature appears at 382-385 (DEAD). Positions 459-608 (KLPWLLEKLP…NVPPELTDLA (150 aa)) constitute a Helicase C-terminal domain. Disordered regions lie at residues 604-638 (LTDL…KGVR), 647-666 (GFSS…SRSG), and 706-760 (FVSG…GWDN). Over residues 615 to 628 (KSKRDGRKGGKKGR) the composition is skewed to basic residues. Positions 629–638 (GGGGGNKGVR) are enriched in gly residues. The segment covering 649–666 (SSESSRTPSSKAAPSRSG) has biased composition (polar residues). Gly residues predominate over residues 707-716 (VSGGTIGGDM). Residues 718-732 (RTQSQAPPVAPTQNA) show a composition bias toward polar residues. Over residues 733–745 (SSHNSSQNHSQSS) the composition is skewed to low complexity. Over residues 750–760 (RERKRRSGWDN) the composition is skewed to basic residues.

It belongs to the DEAD box helicase family.

It carries out the reaction ATP + H2O = ADP + phosphate + H(+). The chain is DEAD-box ATP-dependent RNA helicase 24 (RH24) from Arabidopsis thaliana (Mouse-ear cress).